The following is a 1522-amino-acid chain: ATP-binding cassette sub-family C member 3 (1522 aa).

Residues 1 to 32 (MDRLCGSGELGSKFWDSNLTVYTNTPDLTPCF) lie on the Extracellular side of the membrane. N18 is a glycosylation site (N-linked (GlcNAc...) asparagine). The chain crosses the membrane as a helical span at residues 33 to 53 (QNSLLAWVPCIYLWAALPCYL). Over 54 to 73 (FYLRHHRLGYIVLSCLSRLK) the chain is Cytoplasmic. A helical membrane pass occupies residues 74-94 (TALGVLLWCISWVDLFYSFHG). At 95-99 (LVHGS) the chain is on the extracellular side. A helical transmembrane segment spans residues 100–120 (SPAPVFFITPLLVGITMLLAT). Residues 121-132 (LLIQYERLRGVR) are Cytoplasmic-facing. A helical membrane pass occupies residues 133-153 (SSGVLIIFWLLCVICAIIPFR). The Extracellular segment spans residues 154–171 (SKILLALAEGKILDPFRF). The helical transmembrane segment at 172 to 192 (TTFYIYFALVLCAFILSCFQE) threads the bilayer. Over 193–301 (KPPLFSPENL…KTKKPSFLRA (109 aa)) the chain is Cytoplasmic. A helical membrane pass occupies residues 302–322 (LVRTFTSSLLMGACFKLIQDL). One can recognise an ABC transmembrane type-1 1 domain in the interval 310-592 (LLMGACFKLI…LPQLISGMTQ (283 aa)). At 323–347 (SPSSTHSCSASSSGLFRPHGPYWWG) the chain is on the extracellular side. The chain crosses the membrane as a helical span at residues 348–368 (FLLAGLMFVSSTMQTLILHQH). Residues 369 to 424 (YHCIFVMALRIRTAIIGVIYRKALTITNSVKREYTVGEMVNLMSVDAQRFMDVSPF) are Cytoplasmic-facing. The helical transmembrane segment at 425 to 445 (INLLWSAPLQVILAIYFLWQI) threads the bilayer. Over 446 to 448 (LGP) the chain is Extracellular. The helical transmembrane segment at 449–469 (SALAGVAVIVLLIPLNGAVSM) threads the bilayer. The Cytoplasmic portion of the chain corresponds to 470–531 (KMKTYQVQQM…LLRKGAYLQA (62 aa)). A helical transmembrane segment spans residues 532-552 (ISTFIWVCTPFMVTLITLGVY). At 553–574 (VCVDKNNVLDAEKAFVSLSLFN) the chain is on the extracellular side. Residues 575–595 (ILKIPLNLLPQLISGMTQTSV) form a helical membrane-spanning segment. Topologically, residues 596–958 (SLKRIQDFLN…VKLSVYWDYA (363 aa)) are cytoplasmic. The ABC transporter 1 domain occupies 625–849 (ITIHNGTFSW…DGSFANFLRN (225 aa)). 659–666 (GPVGCGKS) contacts ATP. Phosphoserine occurs at positions 902 and 905. The helical transmembrane segment at 959-979 (KSVGLCTTLFICLLYAGQNAV) threads the bilayer. Residues 966–1247 (TLFICLLYAG…MIRTLSDLES (282 aa)) form the ABC transmembrane type-1 2 domain. The Extracellular segment spans residues 980–1016 (AIGANVWLSAWTNDVEEHGQQNNTSVRLGVYATLGIL). N1001 and N1002 each carry an N-linked (GlcNAc...) asparagine glycan. A helical transmembrane segment spans residues 1017-1037 (QGLLVMLSAFTMVVGAIQAAR). Residues 1038-1080 (LLHTALLHNQIRAPQSFFDTTPSGRILNRFSKDIYVIHEVLAP) are Cytoplasmic-facing. The helical transmembrane segment at 1081–1101 (TILMLFNSFYTSISTIVVIVA) threads the bilayer. S1102 is a topological domain (extracellular). A helical membrane pass occupies residues 1103–1123 (TPLFCVVVLPLAVFYGFVQRF). Residues 1124 to 1194 (YVATSRQLKR…ASNRWLGVHV (71 aa)) are Cytoplasmic-facing. The helical transmembrane segment at 1195–1215 (EFVGNCVVLFSALFAVIGRNS) threads the bilayer. At 1216–1217 (LN) the chain is on the extracellular side. The chain crosses the membrane as a helical span at residues 1218 to 1238 (PGLVGLSVSYALQVTLSLNWM). Residues 1239–1522 (IRTLSDLESN…YGMAKDAGLA (284 aa)) are Cytoplasmic-facing. Residues 1286 to 1518 (FRNYSVRYRP…GGIFYGMAKD (233 aa)) enclose the ABC transporter 2 domain. 1318–1325 (GRTGAGKS) is an ATP binding site.

The protein belongs to the ABC transporter superfamily. ABCC family. Conjugate transporter (TC 3.A.1.208) subfamily. In terms of tissue distribution, expressed in lung, ileum, colon and liver. Higher in liver of Eisai hyperbilirubinemic rats.

Its subcellular location is the basolateral cell membrane. The protein resides in the basal cell membrane. The enzyme catalyses an S-substituted glutathione(in) + ATP + H2O = an S-substituted glutathione(out) + ADP + phosphate + H(+). The catalysed reaction is ATP + H2O + xenobioticSide 1 = ADP + phosphate + xenobioticSide 2.. It carries out the reaction taurocholate(in) + ATP + H2O = taurocholate(out) + ADP + phosphate + H(+). It catalyses the reaction glycocholate(in) + ATP + H2O = glycocholate(out) + ADP + phosphate + H(+). The enzyme catalyses taurolithocholate 3-sulfate(in) + ATP + H2O = taurolithocholate 3-sulfate(out) + ADP + phosphate + H(+). The catalysed reaction is 17beta-estradiol 17-O-(beta-D-glucuronate)(in) + ATP + H2O = 17beta-estradiol 17-O-(beta-D-glucuronate)(out) + ADP + phosphate + H(+). It carries out the reaction dehydroepiandrosterone 3-sulfate(in) + ATP + H2O = dehydroepiandrosterone 3-sulfate(out) + ADP + phosphate + H(+). It catalyses the reaction leukotriene C4(in) + ATP + H2O = leukotriene C4(out) + ADP + phosphate + H(+). The enzyme catalyses (4Z,15Z)-bilirubin IXalpha C8-beta-D-glucuronoside(in) + ATP + H2O = (4Z,15Z)-bilirubin IXalpha C8-beta-D-glucuronoside(out) + ADP + phosphate + H(+). The catalysed reaction is (4Z,15Z)-bilirubin IXalpha C8,C12-beta-D-bisglucuronoside(in) + ATP + H2O = (4Z,15Z)-bilirubin IXalpha C8,C12-beta-D-bisglucuronoside(out) + ADP + phosphate + H(+). It carries out the reaction taurochenodeoxycholate 3-sulfate(in) + ATP + H2O = taurochenodeoxycholate 3-sulfate(out) + ADP + phosphate + H(+). In terms of biological role, ATP-dependent transporter of the ATP-binding cassette (ABC) family that binds and hydrolyzes ATP to enable active transport of various substrates including many drugs, toxicants and endogenous compound across cell membranes. Transports glucuronide conjugates such as bilirubin diglucuronide, estradiol-17-beta-o-glucuronide and GSH conjugates such as leukotriene C4 (LTC4). Transports also various bile salts (taurocholate, glycocholate, taurochenodeoxycholate-3-sulfate, taurolithocholate- 3-sulfate). Does not contribute substantially to bile salt physiology but provides an alternative route for the export of bile acids and glucuronides from cholestatic hepatocytes. May contribute to regulate the transport of organic compounds in testes across the blood-testis-barrier. The sequence is that of ATP-binding cassette sub-family C member 3 (Abcc3) from Rattus norvegicus (Rat).